The sequence spans 246 residues: 3-deoxy-manno-octulosonate cytidylyltransferase (246 aa).

It belongs to the KdsB family.

The protein resides in the cytoplasm. It carries out the reaction 3-deoxy-alpha-D-manno-oct-2-ulosonate + CTP = CMP-3-deoxy-beta-D-manno-octulosonate + diphosphate. It functions in the pathway nucleotide-sugar biosynthesis; CMP-3-deoxy-D-manno-octulosonate biosynthesis; CMP-3-deoxy-D-manno-octulosonate from 3-deoxy-D-manno-octulosonate and CTP: step 1/1. It participates in bacterial outer membrane biogenesis; lipopolysaccharide biosynthesis. In terms of biological role, activates KDO (a required 8-carbon sugar) for incorporation into bacterial lipopolysaccharide in Gram-negative bacteria. This Leptospira borgpetersenii serovar Hardjo-bovis (strain JB197) protein is 3-deoxy-manno-octulosonate cytidylyltransferase.